Here is a 184-residue protein sequence, read N- to C-terminus: Ribosome-recycling factor (184 aa).

Belongs to the RRF family.

The protein resides in the cytoplasm. Functionally, responsible for the release of ribosomes from messenger RNA at the termination of protein biosynthesis. May increase the efficiency of translation by recycling ribosomes from one round of translation to another. The protein is Ribosome-recycling factor of Bifidobacterium animalis subsp. lactis (strain AD011).